The primary structure comprises 319 residues: Annexin A4 (319 aa).

A2 bears the N-acetylalanine mark. T7 is subject to Phosphothreonine; by PKC. Residue S12 is modified to Phosphoserine. 4 Annexin repeats span residues 14-85 (FNAA…GMMT), 86-157 (PTVL…SLSA), 169-241 (ALVR…AIVK), and 245-316 (NKSA…ILCG). N6-acetyllysine is present on residues K213, K293, and K300.

The protein belongs to the annexin family. In terms of assembly, monomer.

The protein localises to the zymogen granule membrane. Its function is as follows. Calcium/phospholipid-binding protein which promotes membrane fusion and is involved in exocytosis. This is Annexin A4 (ANXA4) from Sus scrofa (Pig).